The sequence spans 311 residues: Histidine decarboxylase proenzyme (311 aa).

The substrate site is built by aspartate 64 and serine 82. The residue at position 83 (serine 83) is a Pyruvic acid (Ser). The active-site Proton donor is glutamate 198.

In terms of assembly, the proenzyme is a hexamer of identical pi chains; each pi chain monomer is cleaved to form a small (or beta) chain and a large (or alpha) chain by non-hydrolytic self-catalysis. Requires pyruvate as cofactor.

The catalysed reaction is L-histidine + H(+) = histamine + CO2. The sequence is that of Histidine decarboxylase proenzyme (hdcA) from Lactobacillus sp. (strain 30a).